The following is a 92-amino-acid chain: MARSIRKGPFIDHHLISKVEAAIESKSKKPIKTWSRRSTIVPEMIDLTIAVHNGKDHVPVFITDNMVGHKLGEFAMTRTFKGHSGDRKAKGK.

It belongs to the universal ribosomal protein uS19 family.

Protein S19 forms a complex with S13 that binds strongly to the 16S ribosomal RNA. This chain is Small ribosomal subunit protein uS19, found in Legionella pneumophila (strain Paris).